Here is a 68-residue protein sequence, read N- to C-terminus: Large ribosomal subunit protein bL32 (68 aa).

Positions 1–21 are disordered; sequence MAVQQNKVSKSRRNNRRAHDS.

The protein belongs to the bacterial ribosomal protein bL32 family.

This Roseobacter denitrificans (strain ATCC 33942 / OCh 114) (Erythrobacter sp. (strain OCh 114)) protein is Large ribosomal subunit protein bL32.